We begin with the raw amino-acid sequence, 333 residues long: MTENSDKVPIALVGPDDVEFCGPPAYATVTVKPSGPARLLKVGAVVLISGAVLLLFGAIGAFYLWKGSDNHIYNVHYTMSINGKLQDGSMEIDARNNLETFKMGSGAEEAIEVNDFQNGITGIRFAGGEKCYIKAQVKARVPEVGTVTQQSISSELEGKIMPVKHEEEALVWVAVGQPVQDNSFLSARVLELCGDLPIFWLKPTYPKEIQRERREVVRKTVPTTTKRPHSGPRGNPGPARMRNDSRPSVQEDSEPFNPDNPYHQEGESMTFDPRLDHEGICCIECRRSYTHCQKICEPLGGYNPWPYNYQGCRSACRVVMPCSWWVARILGMV.

The chain crosses the membrane as a helical span at residues 42-62 (VGAVVLISGAVLLLFGAIGAF). A BRICHOS domain is found at 104-201 (GSGAEEAIEV…LCGDLPIFWL (98 aa)). C131 and C193 are disulfide-bonded. Positions 211–214 (RERR) are excised as a propeptide. The segment at 212 to 269 (ERREVVRKTVPTTTKRPHSGPRGNPGPARMRNDSRPSVQEDSEPFNPDNPYHQEGESM) is disordered. An N-linked (GlcNAc...) asparagine glycan is attached at N243. 4 cysteine pairs are disulfide-bonded: C281–C285, C282–C322, C292–C316, and C296–C312.

Belongs to the chondromodulin-1 family. Post-translationally, after cleavage, the post-translationally modified ChM-I is secreted as a glycoprotein.

It is found in the secreted. It localises to the extracellular space. Its subcellular location is the extracellular matrix. The protein localises to the endomembrane system. Functionally, bifunctional growth regulator that stimulates the growth of cultured chondrocytes in the presence of basic fibroblast growth factor (FGF) but inhibits the growth of cultured vascular endothelial cells. May contribute to the rapid growth of cartilage and vascular invasion prior to the replacement of cartilage by bone during endochondral bone development. Inhibits in vitro tube formation and mobilization of endothelial cells. Plays a role as antiangiogenic factor in cardiac valves to suppress neovascularization. The chain is Leukocyte cell-derived chemotaxin 1 from Oryctolagus cuniculus (Rabbit).